A 290-amino-acid chain; its full sequence is UBX domain-containing protein 1-B (290 aa).

The region spanning 1-42 (MADCSALESLIEMGFSPSRAEKALSATGNQGIEPAMDWLVEH) is the UBA domain. Positions 49 to 210 (KEPSVVIPED…VQEPPTKKEY (162 aa)) are disordered. Basic and acidic residues-rich tracts occupy residues 80-117 (PLTE…EQEK) and 132-172 (RMQE…DRAR). Residues 81 to 171 (LTEEEKEKQT…KIARDKADRA (91 aa)) adopt a coiled-coil conformation. Residues 185 to 201 (PAETSVPATAPSPSSPV) show a composition bias toward low complexity. One can recognise a UBX domain in the interval 208-287 (KEYDQCRIQV…GLVPTAVLIV (80 aa)).

Its subcellular location is the cytoplasm. Component of a complex required to couple deglycosylation and proteasome-mediated degradation of misfolded proteins in the endoplasmic reticulum that are retrotranslocated in the cytosol. Involved in ubiquitin-proteasome systems. This is UBX domain-containing protein 1-B (ubxn1-b) from Xenopus laevis (African clawed frog).